The sequence spans 352 residues: Cell division protein ZipA (352 aa).

Residues 1 to 5 lie on the Periplasmic side of the membrane; sequence MQELR. Residues 6-26 traverse the membrane as a helical segment; the sequence is LVLIIVGALAISALLLHGLWT. Topologically, residues 27–352 are cytoplasmic; sequence SRKEKPAKFG…REKAKLYSQA (326 aa). Residues 35–54 show a composition bias toward basic and acidic residues; that stretch reads FGEKPLGKLDDSNRDTEGFD. Residues 35–56 are disordered; it reads FGEKPLGKLDDSNRDTEGFDHT.

It belongs to the ZipA family. In terms of assembly, interacts with FtsZ via their C-terminal domains.

Its subcellular location is the cell inner membrane. Functionally, essential cell division protein that stabilizes the FtsZ protofilaments by cross-linking them and that serves as a cytoplasmic membrane anchor for the Z ring. Also required for the recruitment to the septal ring of downstream cell division proteins. This Photobacterium profundum (strain SS9) protein is Cell division protein ZipA.